The chain runs to 997 residues: Pro-apoptotic serine protease NMA111 (997 aa).

The segment at 1-43 (MTISLSNIKKRDHSKISDGTSGESSLVKRKQLESATGDQEEEY) is disordered. Residues 83–273 (VVSIHFSQVA…LPLDRILRAL (191 aa)) are serine protease. Catalysis depends on charge relay system residues H121, D152, and S235. PDZ domains lie at 300–378 (RRLG…QRGG) and 779–854 (EEWI…VRDG).

It belongs to the peptidase S1C family. As to quaternary structure, interacts with BIR1.

The protein resides in the nucleus. Functionally, nuclear serine protease which mediates apoptosis through proteolysis of the apoptotic inhibitor BIR1. This is Pro-apoptotic serine protease NMA111 (NMA111) from Saccharomyces cerevisiae (strain YJM789) (Baker's yeast).